A 505-amino-acid chain; its full sequence is AMP phosphorylase (505 aa).

AMP is bound by residues G170, 196-201 (SRAITS), and T205. The active-site Proton donor is D258. The AMP site is built by S266 and K290.

This sequence belongs to the thymidine/pyrimidine-nucleoside phosphorylase family. Type 2 subfamily.

The enzyme catalyses AMP + phosphate = alpha-D-ribose 1,5-bisphosphate + adenine. It carries out the reaction CMP + phosphate = cytosine + alpha-D-ribose 1,5-bisphosphate. The catalysed reaction is UMP + phosphate = alpha-D-ribose 1,5-bisphosphate + uracil. In terms of biological role, catalyzes the conversion of AMP and phosphate to adenine and ribose 1,5-bisphosphate (R15P). Exhibits phosphorylase activity toward CMP and UMP in addition to AMP. Functions in an archaeal AMP degradation pathway, together with R15P isomerase and RubisCO. This is AMP phosphorylase from Methanococcus maripaludis (strain DSM 14266 / JCM 13030 / NBRC 101832 / S2 / LL).